A 1755-amino-acid chain; its full sequence is Deleted in lung and esophageal cancer protein 1 (1755 aa).

A compositionally biased stretch (basic residues) spans 1–12 (METRSSKTRRSL). 3 disordered regions span residues 1-39 (METR…PSQP), 1339-1360 (PGPS…GSSS), and 1529-1553 (SQDG…EETA). Residues 30 to 39 (PAGSSSPSQP) show a composition bias toward low complexity.

As to quaternary structure, interacts with alpha- and beta-tubulin. Interacts with BBS2, BBS4, BBS5, MKKS, TCP1, CCT2, CCT3, CCT4, CCT5 and CCT7. Expressed in all tissues examined. Expression is highest in prostate and testis.

It localises to the cytoplasm. Essential for spermatogenesis and male fertility. May play an important role in sperm head and tail formation. May act as a tumor suppressor by inhibiting cell proliferation. This Homo sapiens (Human) protein is Deleted in lung and esophageal cancer protein 1.